The chain runs to 450 residues: UDP-N-acetylmuramoylalanine--D-glutamate ligase (450 aa).

119-125 is an ATP binding site; the sequence is GSNGKTT.

It belongs to the MurCDEF family.

It localises to the cytoplasm. It carries out the reaction UDP-N-acetyl-alpha-D-muramoyl-L-alanine + D-glutamate + ATP = UDP-N-acetyl-alpha-D-muramoyl-L-alanyl-D-glutamate + ADP + phosphate + H(+). Its pathway is cell wall biogenesis; peptidoglycan biosynthesis. Cell wall formation. Catalyzes the addition of glutamate to the nucleotide precursor UDP-N-acetylmuramoyl-L-alanine (UMA). The protein is UDP-N-acetylmuramoylalanine--D-glutamate ligase of Streptococcus pneumoniae (strain Taiwan19F-14).